The primary structure comprises 91 residues: Elongation factor 1-beta (91 aa).

This sequence belongs to the EF-1-beta/EF-1-delta family.

Promotes the exchange of GDP for GTP in EF-1-alpha/GDP, thus allowing the regeneration of EF-1-alpha/GTP that could then be used to form the ternary complex EF-1-alpha/GTP/AAtRNA. The sequence is that of Elongation factor 1-beta from Saccharolobus islandicus (strain Y.N.15.51 / Yellowstone #2) (Sulfolobus islandicus).